The sequence spans 1052 residues: Protein HelA (1052 aa).

13 helical membrane-spanning segments follow: residues 14 to 34 (WFVL…FQRL), 121 to 141 (LPPG…EIFM), 348 to 368 (GALL…AALI), 369 to 389 (TAMV…ENQI), 393 to 413 (LMSL…IIVE), 450 to 470 (SIFG…LTGV), 483 to 503 (IIAL…AVAI), 537 to 557 (VVIS…FHLG), 878 to 898 (LQIV…ISFG), 903 to 923 (ALLV…ALWL), 934 to 954 (VGFI…ITFI), 979 to 999 (PVLM…LATG), and 1011 to 1031 (VVIG…PGLY).

Belongs to the resistance-nodulation-cell division (RND) (TC 2.A.6) family.

Its subcellular location is the cell inner membrane. Functionally, presumed to function with HelC and HelB in efflux of an unidentified substrate. This is Protein HelA (helA) from Legionella pneumophila.